We begin with the raw amino-acid sequence, 368 residues long: Endophilin-A2 (368 aa).

The membrane-binding amphipathic helix stretch occupies residues 1 to 21; the sequence is MSVAGLKKQFYKASQLVSEKV. Residues 18 to 249 form the BAR domain; the sequence is SEKVGGAEGT…LKRRVREASS (232 aa). Residues 60 to 87 are required for dimerization upon membrane association; it reads PNPASRAKLTMLNTVSKIRGQVKNPGYP. The stretch at 180 to 250 forms a coiled coil; that stretch reads DEELRQALEK…KRRVREASSR (71 aa). The tract at residues 218–254 is interaction with ARC; it reads LVDAQLDYHRQAVQILEELADKLKRRVREASSRPRRE. The disordered stretch occupies residues 243 to 309; sequence RVREASSRPR…SKSMPPLDQP (67 aa). Over residues 245–261 the composition is skewed to basic and acidic residues; sequence REASSRPRREFKPRPQE. Residue serine 288 is modified to Phosphoserine. At threonine 298 the chain carries Phosphothreonine. The region spanning 306-365 is the SH3 domain; the sequence is LDQPSCKALYDFEPENDGELGFREGDLITLTNQIDENWYEGMLHGQSGFFPLSYVQVLVP. Tyrosine 315 carries the post-translational modification Phosphotyrosine.

The protein belongs to the endophilin family. As to quaternary structure, interacts with ARC, SYNJ1 and DNM1. Interacts with PDCD6IP. Interacts with BIN2. Detected in brain and testis (at protein level). Ubiquitous.

Its subcellular location is the cytoplasm. The protein localises to the early endosome membrane. It is found in the cell projection. The protein resides in the podosome. Its function is as follows. Implicated in endocytosis. May recruit other proteins to membranes with high curvature. This is Endophilin-A2 (Sh3gl1) from Rattus norvegicus (Rat).